A 270-amino-acid chain; its full sequence is S-adenosylmethionine decarboxylase proenzyme (270 aa).

Ser-117 acts as the Schiff-base intermediate with substrate; via pyruvic acid in catalysis. Ser-117 is subject to Pyruvic acid (Ser); by autocatalysis. The active-site Proton acceptor; for processing activity is His-122. Cys-145 (proton donor; for catalytic activity) is an active-site residue.

The protein belongs to the prokaryotic AdoMetDC family. Type 2 subfamily. As to quaternary structure, heterooctamer of four alpha and four beta chains arranged as a tetramer of alpha/beta heterodimers. It depends on pyruvate as a cofactor. In terms of processing, is synthesized initially as an inactive proenzyme. Formation of the active enzyme involves a self-maturation process in which the active site pyruvoyl group is generated from an internal serine residue via an autocatalytic post-translational modification. Two non-identical subunits are generated from the proenzyme in this reaction, and the pyruvate is formed at the N-terminus of the alpha chain, which is derived from the carboxyl end of the proenzyme. The post-translation cleavage follows an unusual pathway, termed non-hydrolytic serinolysis, in which the side chain hydroxyl group of the serine supplies its oxygen atom to form the C-terminus of the beta chain, while the remainder of the serine residue undergoes an oxidative deamination to produce ammonia and the pyruvoyl group blocking the N-terminus of the alpha chain.

The catalysed reaction is S-adenosyl-L-methionine + H(+) = S-adenosyl 3-(methylsulfanyl)propylamine + CO2. It participates in amine and polyamine biosynthesis; S-adenosylmethioninamine biosynthesis; S-adenosylmethioninamine from S-adenosyl-L-methionine: step 1/1. In terms of biological role, catalyzes the decarboxylation of S-adenosylmethionine to S-adenosylmethioninamine (dcAdoMet), the propylamine donor required for the synthesis of the polyamines spermine and spermidine from the diamine putrescine. The protein is S-adenosylmethionine decarboxylase proenzyme of Pseudoalteromonas translucida (strain TAC 125).